A 127-amino-acid polypeptide reads, in one-letter code: NADH-ubiquinone oxidoreductase chain 1 (127 aa).

3 helical membrane passes run 2-22, 71-91, and 100-120; these read LLLFLNSVGFIVPVLLAVALL, YLFYSSPALFLFLAILLWSII, and FNLSLVLILGLSSLSVYSLLG.

Belongs to the complex I subunit 1 family.

The protein resides in the mitochondrion inner membrane. The enzyme catalyses a ubiquinone + NADH + 5 H(+)(in) = a ubiquinol + NAD(+) + 4 H(+)(out). In terms of biological role, core subunit of the mitochondrial membrane respiratory chain NADH dehydrogenase (Complex I) that is believed to belong to the minimal assembly required for catalysis. Complex I functions in the transfer of electrons from NADH to the respiratory chain. The immediate electron acceptor for the enzyme is believed to be ubiquinone. In Asterias forbesi (Forbes' starfish), this protein is NADH-ubiquinone oxidoreductase chain 1 (ND1).